Here is a 232-residue protein sequence, read N- to C-terminus: E3 ubiquitin-protein ligase RNF125 (232 aa).

The span at 1–10 (MGSVLSTDSG) shows a compositional bias: polar residues. The segment at 1–23 (MGSVLSTDSGKSAPASATARALE) is disordered. Residue Gly2 is the site of N-myristoyl glycine attachment. Zn(2+)-binding residues include Cys37 and Cys40. The RING-type zinc-finger motif lies at 37 to 76 (CAVCLEVLHQPVRTRCGHVFCRSCIATSLKNNKWTCPYCR). The tract at residues 43–45 (VLH) is interaction with the C2HC RNF-type zinc finger. Zn(2+) contacts are provided by Cys52, His54, Cys57, Cys60, Cys72, Cys75, Cys100, and Cys103. The segment at 100–119 (CAECDTLVCLSEMRAHIRTC) adopts a C2HC RNF-type zinc-finger fold. Positions 109 to 113 (LSEMR) are interaction with the RING-type zinc finger. 2 residues coordinate Zn(2+): His115 and Cys119. The segment at 120–128 (QKYIDKYGP) is linker region. Residues 210 to 224 (EEALIRRVLDRSLLE) form a required for interaction with ubiquitin and for autoubiquitination region.

In terms of assembly, interacts with UBE2D1. Interacts with VCP/p97; leading to recruit RNF125 to RIGI and promote ubiquitination of RIGI. Post-translationally, autoubiquitinated, leading to its subsequent proteasomal degradation. Predominantly expressed in lymphoid tissues, including bone marrow, spleen and thymus. Also weakly expressed in other tissues. Predominant in the CD4(+) and CD8(+) T-cells, suggesting that it is preferentially confined to T-cells.

The protein localises to the golgi apparatus membrane. It carries out the reaction S-ubiquitinyl-[E2 ubiquitin-conjugating enzyme]-L-cysteine + [acceptor protein]-L-lysine = [E2 ubiquitin-conjugating enzyme]-L-cysteine + N(6)-ubiquitinyl-[acceptor protein]-L-lysine.. The protein operates within protein modification; protein ubiquitination. Its function is as follows. E3 ubiquitin-protein ligase that mediates ubiquitination and subsequent proteasomal degradation of target proteins, such as RIGI, MAVS/IPS1, IFIH1/MDA5, JAK1 and p53/TP53. Acts as a negative regulator of type I interferon production by mediating ubiquitination of RIGI at 'Lys-181', leading to RIGI degradation. Mediates ubiquitination and subsequent degradation of p53/TP53. Mediates ubiquitination and subsequent degradation of JAK1. Acts as a positive regulator of T-cell activation. This is E3 ubiquitin-protein ligase RNF125 from Homo sapiens (Human).